The sequence spans 451 residues: Alpha-galactosidase (451 aa).

5-71 (PKITFIGAGS…ASGKITCHTQ (67 aa)) contacts NAD(+). N151 is a binding site for substrate. C173 provides a ligand contact to Mn(2+). Catalysis depends on H174, which acts as the Proton donor. A Mn(2+)-binding site is contributed by H203. Position 287 (R287) interacts with substrate.

The protein belongs to the glycosyl hydrolase 4 family. As to quaternary structure, homodimer. Requires NAD(+) as cofactor. The cofactor is Mn(2+).

The catalysed reaction is Hydrolysis of terminal, non-reducing alpha-D-galactose residues in alpha-D-galactosides, including galactose oligosaccharides, galactomannans and galactolipids.. This chain is Alpha-galactosidase (melA), found in Escherichia coli (strain K12).